The sequence spans 777 residues: B3 domain-containing protein REM-like 1 (777 aa).

The segment at residues phenylalanine 97–glutamate 193 is a DNA-binding region (TF-B3 1). Disordered regions lie at residues valine 200–serine 248 and lysine 344–serine 391. The span at lysine 218–aspartate 243 shows a compositional bias: basic and acidic residues. Residues threonine 252–serine 347 constitute a DNA-binding region (TF-B3 2). A compositionally biased stretch (polar residues) spans lysine 344–methionine 368. Residues lysine 370–glutamate 388 show a composition bias toward basic and acidic residues. 2 consecutive DNA-binding regions (TF-B3) follow at residues phenylalanine 582–serine 676 and phenylalanine 683–lysine 777.

The protein localises to the nucleus. This is B3 domain-containing protein REM-like 1 from Arabidopsis thaliana (Mouse-ear cress).